The primary structure comprises 101 residues: Urease subunit beta (101 aa).

It belongs to the urease beta subunit family. As to quaternary structure, heterotrimer of UreA (gamma), UreB (beta) and UreC (alpha) subunits. Three heterotrimers associate to form the active enzyme.

The protein localises to the cytoplasm. It catalyses the reaction urea + 2 H2O + H(+) = hydrogencarbonate + 2 NH4(+). It functions in the pathway nitrogen metabolism; urea degradation; CO(2) and NH(3) from urea (urease route): step 1/1. The polypeptide is Urease subunit beta (Rhizobium johnstonii (strain DSM 114642 / LMG 32736 / 3841) (Rhizobium leguminosarum bv. viciae)).